Here is a 240-residue protein sequence, read N- to C-terminus: Ribonuclease HII (240 aa).

In terms of domain architecture, RNase H type-2 spans Gly27 to Asp226. Asp33, Glu34, and Asp127 together coordinate a divalent metal cation.

Belongs to the RNase HII family. It depends on Mn(2+) as a cofactor. Mg(2+) serves as cofactor.

Its subcellular location is the cytoplasm. It catalyses the reaction Endonucleolytic cleavage to 5'-phosphomonoester.. Its function is as follows. Endonuclease that specifically degrades the RNA of RNA-DNA hybrids. The chain is Ribonuclease HII from Frankia casuarinae (strain DSM 45818 / CECT 9043 / HFP020203 / CcI3).